The following is a 312-amino-acid chain: Taste receptor type 2 member 9 (312 aa).

Residues 1–9 lie on the Extracellular side of the membrane; that stretch reads MPSAIEAIY. Residues 10–32 traverse the membrane as a helical segment; that stretch reads IILIAGELTIGIWGNGFIVLVNC. Residues 33 to 52 are Cytoplasmic-facing; it reads IDWLKRRDISLIDIILISLA. A helical transmembrane segment spans residues 53 to 72; that stretch reads ISRICLLCVISLDGFFMLLF. Residues 73 to 86 are Extracellular-facing; the sequence is PGTYGNSVLVSIVN. A helical transmembrane segment spans residues 87-109; the sequence is VVWTFANNSSLWFTSCLSIFYLL. Residues 110-128 lie on the Cytoplasmic side of the membrane; sequence KIANISHPFFFWLKLKINK. Residues 129–146 traverse the membrane as a helical segment; it reads VMLAILLGSFLISLIISV. Over 147 to 180 the chain is Extracellular; it reads PKNDDMWYHLFKVSHEENITWKFKVSKIPGTFKQ. N-linked (GlcNAc...) asparagine glycosylation is present at asparagine 164. A helical membrane pass occupies residues 181–203; sequence LTLNLGVMVPFILCLISFFLLLF. The Cytoplasmic segment spans residues 204 to 234; that stretch reads SLVRHTKQIRLHATGFRDPSTEAHMRAIKAV. A helical transmembrane segment spans residues 235–257; it reads IIFLLLLIVYYPVFLVMTSSALI. At 258 to 261 the chain is on the extracellular side; sequence PQGK. Residues 262-284 traverse the membrane as a helical segment; the sequence is LVLMIGDIVTVIFPSSHSFILIM. The Cytoplasmic segment spans residues 285–312; the sequence is GNSKLREAFLKMLRFVKCFLRRRKPFVP.

This sequence belongs to the G-protein coupled receptor T2R family. As to expression, expressed in subsets of taste receptor cells of the tongue and palate epithelium and exclusively in gustducin-positive cells.

It is found in the membrane. Functionally, gustducin-coupled receptor implicated in the perception of bitter compounds in the oral cavity and the gastrointestinal tract. Signals through PLCB2 and the calcium-regulated cation channel TRPM5. This is Taste receptor type 2 member 9 (TAS2R9) from Homo sapiens (Human).